Consider the following 3120-residue polypeptide: DNA-directed RNA polymerase subunit beta'' (3120 aa).

The Zn(2+) site is built by C323, C396, C403, and C406. Residues F595–F1130 form an insert-1 region. An insert-2 region spans residues K1796–L2346. Positions N2422 to T2610 are insert-3. The segment at F2726–L2801 is insert-4. The tract at residues A2856–D2996 is insert-5. The tract at residues E2926–V2956 is disordered. The segment covering K2932–N2946 has biased composition (polar residues).

It belongs to the RNA polymerase beta' chain family. RpoC2 subfamily. In plastids the minimal PEP RNA polymerase catalytic core is composed of four subunits: alpha, beta, beta', and beta''. When a (nuclear-encoded) sigma factor is associated with the core the holoenzyme is formed, which can initiate transcription. It depends on Zn(2+) as a cofactor.

The protein resides in the plastid. Its subcellular location is the chloroplast. It carries out the reaction RNA(n) + a ribonucleoside 5'-triphosphate = RNA(n+1) + diphosphate. DNA-dependent RNA polymerase catalyzes the transcription of DNA into RNA using the four ribonucleoside triphosphates as substrates. The sequence is that of DNA-directed RNA polymerase subunit beta'' from Chlamydomonas reinhardtii (Chlamydomonas smithii).